Here is a 794-residue protein sequence, read N- to C-terminus: cAMP and cAMP-inhibited cGMP 3',5'-cyclic phosphodiesterase 10A (794 aa).

Residues Arg-296–Cys-297, Ile-340–Ala-341, Thr-374, Gln-393, and His-525 each bind 3',5'-cyclic AMP. One can recognise a PDEase domain in the interval Thr-452–Glu-769. Residue His-525 is the Proton donor of the active site. His-525 is a 3',5'-cyclic GMP binding site. Residues His-529, His-563, Asp-564, and Asp-674 each contribute to the a divalent metal cation site. Residue Gln-726 participates in 3',5'-cyclic AMP binding. Residue Gln-726 participates in 3',5'-cyclic GMP binding.

Belongs to the cyclic nucleotide phosphodiesterase family. As to quaternary structure, homodimer. The cofactor is a divalent metal cation. As to expression, detected in striatum and testis (at protein level). Detected in whole brain, hippocampus, olfactory bulb, striatum neurons and testis.

The protein localises to the cytoplasm. Its subcellular location is the cytosol. The catalysed reaction is a nucleoside 3',5'-cyclic phosphate + H2O = a nucleoside 5'-phosphate + H(+). It catalyses the reaction 3',5'-cyclic AMP + H2O = AMP + H(+). The enzyme catalyses 3',5'-cyclic GMP + H2O = GMP + H(+). Its pathway is purine metabolism; 3',5'-cyclic AMP degradation; AMP from 3',5'-cyclic AMP: step 1/1. It functions in the pathway purine metabolism; 3',5'-cyclic GMP degradation; GMP from 3',5'-cyclic GMP: step 1/1. Inhibited by dipyridamole and moderately by IBMX, zaprinast and rolipram. In terms of biological role, plays a role in signal transduction by regulating the intracellular concentration of cyclic nucleotides. Can hydrolyze both cAMP and cGMP, but has higher affinity for cAMP and is more efficient with cAMP as substrate. This Rattus norvegicus (Rat) protein is cAMP and cAMP-inhibited cGMP 3',5'-cyclic phosphodiesterase 10A (Pde10a).